Reading from the N-terminus, the 197-residue chain is CASP-like protein 0U1 (197 aa).

Topologically, residues 1–13 (MDDFDPTVTNSPK) are cytoplasmic. Residues 14–34 (FRLIAVQCLFSITAFAAMLSQ) form a helical membrane-spanning segment. The Extracellular portion of the chain corresponds to 35 to 63 (RHGLAGPDEMTLEECGPQACGYQKFSNFK). A helical transmembrane segment spans residues 64-84 (FLIAVCIIYAVFSLVVMAAYL). Over 85 to 99 (LQRVPPPVTELTAYT) the chain is Cytoplasmic. Residues 100 to 120 (VMNVLLFAAFAMSATSCNITI) traverse the membrane as a helical segment. Residues 121-135 (VDPVYPVCKRATSAK) are Extracellular-facing. A helical membrane pass occupies residues 136-156 (ASIAFAFFTWLAVCFSMLFTY). Residues 157 to 197 (KEWRDVDYHVPGSGAYEFVPGVTSGSSRSSYPPQASSSSYA) are Cytoplasmic-facing. The interval 178–197 (VTSGSSRSSYPPQASSSSYA) is disordered. The span at 180 to 197 (SGSSRSSYPPQASSSSYA) shows a compositional bias: low complexity.

Belongs to the Casparian strip membrane proteins (CASP) family. Homodimer and heterodimers.

The protein resides in the cell membrane. This chain is CASP-like protein 0U1, found in Micromonas commoda (strain RCC299 / NOUM17 / CCMP2709) (Picoplanktonic green alga).